We begin with the raw amino-acid sequence, 563 residues long: Eukaryotic translation initiation factor 3 subunit D-1 (563 aa).

Residues 98 to 167 (VQKPPHQRGR…GPPPKMRESS (70 aa)) form a disordered region. Residues 100–121 (KPPHQRGRFRNMRNSRSGRGRN) are compositionally biased toward basic residues. Residue Thr-128 is modified to Phosphothreonine. An RNA gate region spans residues 291–305 (EFDLLTVNETSVEPP).

It belongs to the eIF-3 subunit D family. Component of the eukaryotic translation initiation factor 3 (eIF-3) complex. The eIF-3 complex interacts with pix.

It is found in the cytoplasm. Functionally, mRNA cap-binding component of the eukaryotic translation initiation factor 3 (eIF-3) complex, which is involved in protein synthesis of a specialized repertoire of mRNAs and, together with other initiation factors, stimulates binding of mRNA and methionyl-tRNAi to the 40S ribosome. The eIF-3 complex specifically targets and initiates translation of a subset of mRNAs involved in cell proliferation. In the eIF-3 complex, eif3d specifically recognizes and binds the 7-methylguanosine cap of a subset of mRNAs. In Drosophila virilis (Fruit fly), this protein is Eukaryotic translation initiation factor 3 subunit D-1.